A 155-amino-acid chain; its full sequence is Deoxyuridine 5'-triphosphate nucleotidohydrolase (155 aa).

Residues 74-76 (RSG), Asn87, and 91-93 (LID) each bind substrate.

This sequence belongs to the dUTPase family. It depends on Mg(2+) as a cofactor.

The catalysed reaction is dUTP + H2O = dUMP + diphosphate + H(+). It functions in the pathway pyrimidine metabolism; dUMP biosynthesis; dUMP from dCTP (dUTP route): step 2/2. Functionally, this enzyme is involved in nucleotide metabolism: it produces dUMP, the immediate precursor of thymidine nucleotides and it decreases the intracellular concentration of dUTP so that uracil cannot be incorporated into DNA. In Xanthomonas oryzae pv. oryzae (strain PXO99A), this protein is Deoxyuridine 5'-triphosphate nucleotidohydrolase.